We begin with the raw amino-acid sequence, 78 residues long: D-alanyl carrier protein (78 aa).

The Carrier domain maps to 1-77; it reads MAVKEEVVEI…KVIAKVESLI (77 aa). Residue Ser35 is modified to O-(pantetheine 4'-phosphoryl)serine.

This sequence belongs to the DltC family. In terms of processing, 4'-phosphopantetheine is transferred from CoA to a specific serine of apo-DCP.

The protein resides in the cytoplasm. Its pathway is cell wall biogenesis; lipoteichoic acid biosynthesis. Functionally, carrier protein involved in the D-alanylation of lipoteichoic acid (LTA). The loading of thioester-linked D-alanine onto DltC is catalyzed by D-alanine--D-alanyl carrier protein ligase DltA. The DltC-carried D-alanyl group is further transferred to cell membrane phosphatidylglycerol (PG) by forming an ester bond, probably catalyzed by DltD. D-alanylation of LTA plays an important role in modulating the properties of the cell wall in Gram-positive bacteria, influencing the net charge of the cell wall. This is D-alanyl carrier protein from Leuconostoc citreum (strain KM20).